The primary structure comprises 114 residues: Nuclear transition protein 2 (114 aa).

The interval 1 to 114 (MDTKMQSLPT…KRRSSGRRYK (114 aa)) is disordered. Residues His-12, His-14, His-16, His-24, Cys-29, Cys-31, Cys-35, and Cys-38 each coordinate Zn(2+). A compositionally biased stretch (low complexity) spans 16–25 (HSSSRPQSHT). The short motif at 87–95 (GKVSKRKAV) is the Nuclear localization signal element. The segment covering 90–114 (SKRKAVRRRKRTHRAKRRSSGRRYK) has biased composition (basic residues). A Phosphothreonine; by PKA modification is found at Thr-101. Ser-109 is subject to Phosphoserine; by PKA.

Belongs to the nuclear transition protein 2 family. In terms of tissue distribution, testis.

The protein localises to the nucleus. It is found in the nucleolus. Its subcellular location is the chromosome. Plays a key role in the replacement of histones to protamine in the elongating spermatids of mammals. In condensing spermatids, loaded onto the nucleosomes, where it promotes the recruitment and processing of protamines, which are responsible for histone eviction. This Rattus norvegicus (Rat) protein is Nuclear transition protein 2 (Tnp2).